The following is a 2368-amino-acid chain: Voltage-dependent P/Q-type calcium channel subunit alpha-1A (2368 aa).

Topologically, residues 1–100 are cytoplasmic; sequence MARFGDEMPG…KYAKKITEWP (100 aa). One copy of the I repeat lies at 65–365; the sequence is NPIPVRQNCL…LVLGVLSGEF (301 aa). Residues 101 to 119 form a helical membrane-spanning segment; the sequence is PFEYMILATIIANCIVLAL. At 120-138 the chain is on the extracellular side; sequence EQHLPDDDKTPMSERLDDT. Residues 139–156 traverse the membrane as a helical segment; the sequence is EPYFIGIFCFEAGIKIVA. The Cytoplasmic segment spans residues 157–168; sequence LGFAFHKGSYLR. A helical transmembrane segment spans residues 169-184; the sequence is NGWNVMDFVVVLTGIL. The Extracellular segment spans residues 185-192; it reads ATVGTEFD. Residues 193 to 211 traverse the membrane as a helical segment; it reads LRTLRAVRVLRPLKLVSGI. Topologically, residues 212–230 are cytoplasmic; it reads PSLQVVLKSIMKAMIPLLQ. A helical transmembrane segment spans residues 231 to 250; sequence IGLLLFFAILIFAIIGLEFY. Topologically, residues 251 to 337 are extracellular; sequence MGKFHTTCFE…NSNDASGNTW (87 aa). Residue N285 is glycosylated (N-linked (GlcNAc...) asparagine). E320 contributes to the Ca(2+) binding site. A helical transmembrane segment spans residues 338-362; that stretch reads NWLYFIPLIIIGSFFMLNLVLGVLS. Topologically, residues 363 to 489 are cytoplasmic; the sequence is GEFAKERERV…FYIRRMVKTQ (127 aa). The binding to the beta subunit stretch occupies residues 385 to 402; the sequence is QQIERELNGYMEWISKAE. A Phosphothreonine modification is found at T411. Phosphoserine is present on residues S450 and S453. Residues 475–719 form an II repeat; the sequence is ERRMRFYIRR…VFLAIAVDNL (245 aa). A helical transmembrane segment spans residues 490–509; the sequence is AFYWTVLSLVALNTLCVAIV. The Extracellular portion of the chain corresponds to 510 to 523; sequence HYNQPEWLSDFLYY. A helical transmembrane segment spans residues 524 to 543; it reads AEFIFLGLFMSEMFIKMYGL. Over 544–551 the chain is Cytoplasmic; that stretch reads GTRPYFHS. A helical membrane pass occupies residues 552–570; the sequence is SFNCFDCGVIIGSIFEVIW. At 571–580 the chain is on the extracellular side; that stretch reads AVIKPGTSFG. Residues 581–599 traverse the membrane as a helical segment; the sequence is ISVLRALRLLRIFKVTKYW. The Cytoplasmic segment spans residues 600–618; that stretch reads ASLRNLVVSLLNSMKSIIS. The helical transmembrane segment at 619–638 threads the bilayer; sequence LLFLLFLFIVVFALLGMQLF. Over 639-691 the chain is Extracellular; sequence GGQFNFDEGTPPTNFDTFPAAIMTVFQILTGEDWNEVMYDGIKSQGGVQGGMV. E670 serves as a coordination point for Ca(2+). The helical transmembrane segment at 692-716 threads the bilayer; the sequence is FSIYFIVLTLFGNYTLLNVFLAIAV. The Cytoplasmic portion of the chain corresponds to 717–1190; that stretch reads DNLANAQELT…TNPLRRLCHY (474 aa). A phosphoserine mark is found at S752 and S755. The segment at 762-781 is disordered; it reads AVKEQQKNQKPTKSVWEQRT. Residues 769-779 show a composition bias toward polar residues; the sequence is NQKPTKSVWEQ. S792 is modified (phosphoserine). 2 disordered regions span residues 823–1117 and 1137–1170; these read PLVV…RKPE and VNKN…KPMP. Basic and acidic residues-rich tracts occupy residues 850 to 862, 871 to 924, and 932 to 958; these read RPRE…DARR, APGR…EGEP, and RPGD…RAAD. S1038, S1042, and S1051 each carry phosphoserine. Residues 1056-1073 show a composition bias toward polar residues; sequence GNSTNPGPALATNPQNAA. The span at 1074 to 1083 shows a compositional bias: low complexity; sequence SRRTPNNPGN. The span at 1094–1111 shows a compositional bias: polar residues; that stretch reads ENSLIVTNPSSTQPNSAK. Residues 1153 to 1163 show a composition bias toward acidic residues; the sequence is KKEEEEADPGE. Residues 1182–1465 form an III repeat; sequence NPLRRLCHYI…IFVALIIITF (284 aa). A helical transmembrane segment spans residues 1191-1214; it reads ILNLRYFEMCILMVIAMSSIALAA. Residues 1215-1231 lie on the Extracellular side of the membrane; that stretch reads EDPVQPNAPRNNVLRYF. The chain crosses the membrane as a helical span at residues 1232-1251; the sequence is DYVFTGVFTFEMVIKMIDLG. The Cytoplasmic portion of the chain corresponds to 1252–1258; sequence LVLHQGA. A helical transmembrane segment spans residues 1259–1282; that stretch reads YFRDLWNILDFIVVSGALVAFAFT. Over 1283–1293 the chain is Extracellular; that stretch reads GNSKGKDINTI. Residues 1294–1311 form a helical membrane-spanning segment; sequence KSLRVLRVLRPLKTIKRL. Topologically, residues 1312–1330 are cytoplasmic; that stretch reads PKLKAVFDCVVNSLKNVFN. A helical transmembrane segment spans residues 1331–1350; it reads ILIVYMLFMFIFAVVAVQLF. At 1351–1437 the chain is on the extracellular side; it reads KGKFFHCTDE…QGPSPGYRME (87 aa). E1411 is a Ca(2+) binding site. The chain crosses the membrane as a helical span at residues 1438–1462; that stretch reads MSIFYVVYFVVFPFFFVNIFVALII. At 1463 to 1518 the chain is on the cytoplasmic side; sequence ITFQEQGDKMMEEYSLEKNERACIDFAISAKPLTRHMPQNKQSFQYRMWQFVVSPP. The stretch at 1502-1765 is one IV repeat; the sequence is NKQSFQYRMW…LFVAVIMDNF (264 aa). A helical transmembrane segment spans residues 1519-1537; the sequence is FEYTIMAMIALNTIVLMMK. Topologically, residues 1538–1551 are extracellular; it reads FYGASVAYENALRV. Residues 1552–1573 traverse the membrane as a helical segment; that stretch reads FNIVFTSLFSLECVLKVMAFGI. Residues 1574 to 1580 are Cytoplasmic-facing; sequence LNYFRDA. A helical transmembrane segment spans residues 1581-1600; that stretch reads WNIFDFVTVLGSITDILVTE. Over 1601-1607 the chain is Extracellular; sequence FGNNFIN. N1607 carries an N-linked (GlcNAc...) asparagine glycan. The chain crosses the membrane as a helical span at residues 1608–1626; that stretch reads LSFLRLFRAARLIKLLRQG. Over 1627-1645 the chain is Cytoplasmic; it reads YTIRILLWTFVQSFKALPY. The chain crosses the membrane as a helical span at residues 1646-1665; sequence VCLLIAMLFFIYAIIGMQVF. Topologically, residues 1666–1737 are extracellular; the sequence is GNIGIDGEDE…ILTADCGNEF (72 aa). A helical transmembrane segment spans residues 1738–1763; sequence AYFYFVSFIFLCSFLMLNLFVAVIMD. At 1764–2368 the chain is on the cytoplasmic side; the sequence is NFEYLTRDSS…AYSESEDDWC (605 aa). T1935 bears the Phosphothreonine mark. The segment at 1940–2368 is disordered; it reads QRMEPPSPTQ…AYSESEDDWC (429 aa). Polar residues-rich tracts occupy residues 1948–1963 and 1981–1997; these read TQEG…STQL and SWVT…TGTW. Phosphoserine occurs at positions 1998, 2016, 2028, 2030, 2071, and 2091. A compositionally biased stretch (polar residues) spans 2008–2017; the sequence is PNSQPNSQSV. The span at 2018–2034 shows a compositional bias: basic and acidic residues; that stretch reads EMREMGTDGYSDSEHYL. The segment covering 2063-2073 has biased composition (polar residues); the sequence is DLSTISDTSPM. Basic and acidic residues-rich tracts occupy residues 2085–2102 and 2143–2153; these read RRLD…ENQR and PSKDRDQDRGR. Basic residues predominate over residues 2154 to 2172; sequence PKDRKHRPHHHHHHHHHHP. A compositionally biased stretch (basic and acidic residues) spans 2173–2209; it reads PAPDRDRYAQERPDTGRARAREQRWSRSPSEGREHTT. Positions 2213-2231 are enriched in low complexity; sequence GSSSVSGSPAPSTSGTSTP. Residues 2289 to 2305 show a composition bias toward basic and acidic residues; it reads EGPRPRGADYTEPDSPR.

It belongs to the calcium channel alpha-1 subunit (TC 1.A.1.11) family. CACNA1A subfamily. As to quaternary structure, voltage-dependent calcium channels are multisubunit complexes, consisting of alpha-1, alpha-2, beta and delta subunits in a 1:1:1:1 ratio. The channel activity is directed by the pore-forming and voltage-sensitive alpha-1 subunit. In many cases, this subunit is sufficient to generate voltage-sensitive calcium channel activity. The auxiliary subunits beta and alpha-2/delta linked by a disulfide bridge regulate the channel activity. Interacts with CABP1. Interacts with the spider omega-agatoxin-IVA (AC P30288). Interacts with TSPOAP1. Brain specific; mainly found in the cerebellum, olfactory bulb, cerebral cortex, hippocampus, and inferior colliculus. In the hippocampus, expression occurs in pyramidal and granule neurons, as well as in interneurons. Purkinje cells contain predominantly P-type VSCC, the Q-type being a prominent calcium current in cerebellar granule cells.

It localises to the cell membrane. It carries out the reaction Ca(2+)(in) = Ca(2+)(out). Voltage-sensitive calcium channels (VSCC) mediate the entry of calcium ions into excitable cells and are also involved in a variety of calcium-dependent processes, including muscle contraction, hormone or neurotransmitter release, gene expression, cell motility, cell division and cell death. The isoform alpha-1A gives rise to P and/or Q-type calcium currents. P/Q-type calcium channels belong to the 'high-voltage activated' (HVA) group and are specifically blocked by the spider omega-agatoxin-IVA (AC P54282). They are however insensitive to dihydropyridines (DHP). The chain is Voltage-dependent P/Q-type calcium channel subunit alpha-1A from Mus musculus (Mouse).